Reading from the N-terminus, the 226-residue chain is MQLSTFSHSEEELLEKANWLAGFTLGEIAHQLNIDVPLDLRRDKGWVGQLIETALGAKAGSKPEQDFAHLGIELKTIPINHKGFPLETTFVSLAPLTQNIGITWQTSHVRHKLQKVLWIPVQGERHIPVAERHIGQPILWAPSCEQEQQLKNDWEELMEYIIFGRLNEINATLGEVLQLRPKGRNSRSLTAAVNQQGERVQSLPLGFYLRKQFTAEILQNFLRSPL.

It belongs to the MutH family.

The protein resides in the cytoplasm. In terms of biological role, sequence-specific endonuclease that cleaves unmethylated GATC sequences. It is involved in DNA mismatch repair. In Actinobacillus pleuropneumoniae serotype 3 (strain JL03), this protein is DNA mismatch repair protein MutH.